Consider the following 739-residue polypeptide: Polyphosphate kinase (739 aa).

The interval Trp22–Pro45 is disordered. Positions Ser27–Ser40 are enriched in low complexity. Residue Asn87 participates in ATP binding. Arg428 and Arg458 together coordinate Mg(2+). Catalysis depends on His488, which acts as the Phosphohistidine intermediate. The ATP site is built by Tyr521, Arg621, and His649. The tract at residues Gln714 to Arg739 is disordered. The segment covering Gln724 to Arg739 has biased composition (basic and acidic residues).

Belongs to the polyphosphate kinase 1 (PPK1) family. Requires Mg(2+) as cofactor. In terms of processing, an intermediate of this reaction is the autophosphorylated ppk in which a phosphate is covalently linked to a histidine residue through a N-P bond.

It catalyses the reaction [phosphate](n) + ATP = [phosphate](n+1) + ADP. Functionally, catalyzes the reversible transfer of the terminal phosphate of ATP to form a long-chain polyphosphate (polyP). The polypeptide is Polyphosphate kinase (Mycobacterium leprae (strain TN)).